The following is a 153-amino-acid chain: ATP synthase subunit b' (153 aa).

The chain crosses the membrane as a helical span at residues 20–40 (TLPLMAVQVVLLTFILNALFF).

The protein belongs to the ATPase B chain family. In terms of assembly, F-type ATPases have 2 components, F(1) - the catalytic core - and F(0) - the membrane proton channel. F(1) has five subunits: alpha(3), beta(3), gamma(1), delta(1), epsilon(1). F(0) has four main subunits: a(1), b(1), b'(1) and c(10-14). The alpha and beta chains form an alternating ring which encloses part of the gamma chain. F(1) is attached to F(0) by a central stalk formed by the gamma and epsilon chains, while a peripheral stalk is formed by the delta, b and b' chains.

Its subcellular location is the cellular thylakoid membrane. In terms of biological role, f(1)F(0) ATP synthase produces ATP from ADP in the presence of a proton or sodium gradient. F-type ATPases consist of two structural domains, F(1) containing the extramembraneous catalytic core and F(0) containing the membrane proton channel, linked together by a central stalk and a peripheral stalk. During catalysis, ATP synthesis in the catalytic domain of F(1) is coupled via a rotary mechanism of the central stalk subunits to proton translocation. Component of the F(0) channel, it forms part of the peripheral stalk, linking F(1) to F(0). The b'-subunit is a diverged and duplicated form of b found in plants and photosynthetic bacteria. This Prochlorococcus marinus (strain MIT 9211) protein is ATP synthase subunit b'.